Reading from the N-terminus, the 289-residue chain is ATP synthase gamma chain (289 aa).

It belongs to the ATPase gamma chain family. As to quaternary structure, F-type ATPases have 2 components, CF(1) - the catalytic core - and CF(0) - the membrane proton channel. CF(1) has five subunits: alpha(3), beta(3), gamma(1), delta(1), epsilon(1). CF(0) has three main subunits: a, b and c.

The protein localises to the cell inner membrane. Functionally, produces ATP from ADP in the presence of a proton gradient across the membrane. The gamma chain is believed to be important in regulating ATPase activity and the flow of protons through the CF(0) complex. The sequence is that of ATP synthase gamma chain from Azoarcus sp. (strain BH72).